A 432-amino-acid polypeptide reads, in one-letter code: 5'-deoxyadenosine deaminase (432 aa).

Positions 63 and 65 each coordinate Zn(2+). 2 residues coordinate substrate: Glu-92 and His-184. His-211 lines the Zn(2+) pocket. Substrate is bound by residues Glu-214 and Asp-299. Asp-299 lines the Zn(2+) pocket.

It belongs to the metallo-dependent hydrolases superfamily. MTA/SAH deaminase family. As to quaternary structure, homotetramer. Zn(2+) serves as cofactor.

It carries out the reaction 5'-deoxyadenosine + H2O + H(+) = 5'-deoxyinosine + NH4(+). It catalyses the reaction S-adenosyl-L-homocysteine + H2O + H(+) = S-inosyl-L-homocysteine + NH4(+). The enzyme catalyses S-methyl-5'-thioadenosine + H2O + H(+) = S-methyl-5'-thioinosine + NH4(+). The catalysed reaction is adenosine + H2O + H(+) = inosine + NH4(+). Its pathway is amino-acid biosynthesis; S-adenosyl-L-methionine biosynthesis. Catalyzes the deamination of three SAM-derived enzymatic products, namely 5'-deoxyadenosine, S-adenosyl-L-homocysteine, and 5'-methylthioadenosine, to produce the inosine analogs. Can also deaminate adenosine. The preferred substrate for this enzyme is 5'-deoxyadenosine, but all these substrates are efficiently deaminated. Likely functions in a S-adenosyl-L-methionine (SAM) recycling pathway from S-adenosyl-L-homocysteine (SAH) produced from SAM-dependent methylation reactions. May also be involved in the recycling of 5'-deoxyadenosine, whereupon the 5'-deoxyribose moiety of 5'-deoxyinosine is further metabolized to deoxyhexoses used for the biosynthesis of aromatic amino acids in methanogens. The protein is 5'-deoxyadenosine deaminase of Methanosarcina acetivorans (strain ATCC 35395 / DSM 2834 / JCM 12185 / C2A).